Reading from the N-terminus, the 474-residue chain is tRNA-2-methylthio-N(6)-dimethylallyladenosine synthase (474 aa).

The MTTase N-terminal domain maps to 3–120 (QKLHIKTWGC…LPEMINQIRG (118 aa)). Residues Cys12, Cys49, Cys83, Cys157, Cys161, and Cys164 each coordinate [4Fe-4S] cluster. One can recognise a Radical SAM core domain in the interval 143–375 (RAEGPTAFVS…QQRINNQAAQ (233 aa)). The TRAM domain occupies 378 to 441 (RAMLGTEQRV…TNSLRGEVVR (64 aa)).

This sequence belongs to the methylthiotransferase family. MiaB subfamily. Monomer. Requires [4Fe-4S] cluster as cofactor.

The protein localises to the cytoplasm. The enzyme catalyses N(6)-dimethylallyladenosine(37) in tRNA + (sulfur carrier)-SH + AH2 + 2 S-adenosyl-L-methionine = 2-methylsulfanyl-N(6)-dimethylallyladenosine(37) in tRNA + (sulfur carrier)-H + 5'-deoxyadenosine + L-methionine + A + S-adenosyl-L-homocysteine + 2 H(+). Its function is as follows. Catalyzes the methylthiolation of N6-(dimethylallyl)adenosine (i(6)A), leading to the formation of 2-methylthio-N6-(dimethylallyl)adenosine (ms(2)i(6)A) at position 37 in tRNAs that read codons beginning with uridine. This is tRNA-2-methylthio-N(6)-dimethylallyladenosine synthase from Pasteurella multocida (strain Pm70).